A 79-amino-acid chain; its full sequence is Small ribosomal subunit protein bS18 (79 aa).

This sequence belongs to the bacterial ribosomal protein bS18 family. Part of the 30S ribosomal subunit. Forms a tight heterodimer with protein bS6.

Binds as a heterodimer with protein bS6 to the central domain of the 16S rRNA, where it helps stabilize the platform of the 30S subunit. The polypeptide is Small ribosomal subunit protein bS18 (Nitrobacter hamburgensis (strain DSM 10229 / NCIMB 13809 / X14)).